We begin with the raw amino-acid sequence, 359 residues long: DNA polymerase IV (359 aa).

Residues 4–184 (IVHVDMDAFY…LKVNRIPGVG (181 aa)) enclose the UmuC domain. Positions 8 and 102 each coordinate Mg(2+). Glu103 is an active-site residue.

It belongs to the DNA polymerase type-Y family. As to quaternary structure, monomer. Requires Mg(2+) as cofactor.

It is found in the cytoplasm. It carries out the reaction DNA(n) + a 2'-deoxyribonucleoside 5'-triphosphate = DNA(n+1) + diphosphate. Poorly processive, error-prone DNA polymerase involved in untargeted mutagenesis. Copies undamaged DNA at stalled replication forks, which arise in vivo from mismatched or misaligned primer ends. These misaligned primers can be extended by PolIV. Exhibits no 3'-5' exonuclease (proofreading) activity. May be involved in translesional synthesis, in conjunction with the beta clamp from PolIII. The sequence is that of DNA polymerase IV from Xanthomonas axonopodis pv. citri (strain 306).